We begin with the raw amino-acid sequence, 126 residues long: C-type natriuretic peptide (126 aa).

Positions 1–23 (MHLSQLLACALLLTLLSLRPSEA) are cleaved as a signal peptide. The interval 19 to 72 (RPSEAKPGAPPKVPRTPPGEEVAEPQAAGGGQKKGDKTPGGGGANLKGDRSRLL) is disordered. Positions 24–73 (KPGAPPKVPRTPPGEEVAEPQAAGGGQKKGDKTPGGGGANLKGDRSRLLR) are excised as a propeptide. The span at 26–35 (GAPPKVPRTP) shows a compositional bias: pro residues. Residues 46-63 (AGGGQKKGDKTPGGGGAN) are compositionally biased toward gly residues. The cysteines at positions 110 and 126 are disulfide-linked.

The protein belongs to the natriuretic peptide family. Post-translationally, degraded by IDE (in vitro).

It is found in the secreted. In terms of biological role, hormone which plays a role in endochondral ossification through regulation of cartilaginous growth plate chondrocytes proliferation and differentiation. May also be vasoactive and natriuretic. Acts by specifically binding and stimulating NPR2 to produce cGMP. Binds the clearance receptor NPR3. The polypeptide is C-type natriuretic peptide (NPPC) (Sus scrofa (Pig)).